The sequence spans 476 residues: Aspartyl/glutamyl-tRNA(Asn/Gln) amidotransferase subunit B 1 (476 aa).

It belongs to the GatB/GatE family. GatB subfamily. As to quaternary structure, heterotrimer of A, B and C subunits.

The catalysed reaction is L-glutamyl-tRNA(Gln) + L-glutamine + ATP + H2O = L-glutaminyl-tRNA(Gln) + L-glutamate + ADP + phosphate + H(+). It carries out the reaction L-aspartyl-tRNA(Asn) + L-glutamine + ATP + H2O = L-asparaginyl-tRNA(Asn) + L-glutamate + ADP + phosphate + 2 H(+). Its function is as follows. Allows the formation of correctly charged Asn-tRNA(Asn) or Gln-tRNA(Gln) through the transamidation of misacylated Asp-tRNA(Asn) or Glu-tRNA(Gln) in organisms which lack either or both of asparaginyl-tRNA or glutaminyl-tRNA synthetases. The reaction takes place in the presence of glutamine and ATP through an activated phospho-Asp-tRNA(Asn) or phospho-Glu-tRNA(Gln). This is Aspartyl/glutamyl-tRNA(Asn/Gln) amidotransferase subunit B 1 (gatB1) from Clostridium acetobutylicum (strain ATCC 824 / DSM 792 / JCM 1419 / IAM 19013 / LMG 5710 / NBRC 13948 / NRRL B-527 / VKM B-1787 / 2291 / W).